An 843-amino-acid polypeptide reads, in one-letter code: Protein P (843 aa).

The interval 1–177 (MPLSYQHFRK…FCGSPYSWEQ (177 aa)) is terminal protein domain (TP). A spacer region spans residues 178-346 (ELQHGRLVFQ…YCLTHIVNLL (169 aa)). The polymerase/reverse transcriptase domain (RT) stretch occupies residues 347 to 690 (EDWGPCTEHG…YLHLYPVARQ (344 aa)). The region spanning 357–600 (EHNIRIPRTP…YSLNFMGYVI (244 aa)) is the Reverse transcriptase domain. Positions 429, 551, and 552 each coordinate Mg(2+).

This sequence belongs to the hepadnaviridae P protein family.

It carries out the reaction DNA(n) + a 2'-deoxyribonucleoside 5'-triphosphate = DNA(n+1) + diphosphate. The enzyme catalyses Endonucleolytic cleavage to 5'-phosphomonoester.. Activated by host HSP70 and HSP40 in vitro to be able to bind the epsilon loop of the pgRNA. Because deletion of the RNase H region renders the protein partly chaperone-independent, the chaperones may be needed indirectly to relieve occlusion of the RNA-binding site by this domain. Inhibited by several reverse-transcriptase inhibitors: Lamivudine, Adefovir and Entecavir. Its function is as follows. Multifunctional enzyme that converts the viral RNA genome into dsDNA in viral cytoplasmic capsids. This enzyme displays a DNA polymerase activity that can copy either DNA or RNA templates, and a ribonuclease H (RNase H) activity that cleaves the RNA strand of RNA-DNA heteroduplexes in a partially processive 3'- to 5'-endonucleasic mode. Neo-synthesized pregenomic RNA (pgRNA) are encapsidated together with the P protein, and reverse-transcribed inside the nucleocapsid. Initiation of reverse-transcription occurs first by binding the epsilon loop on the pgRNA genome, and is initiated by protein priming, thereby the 5'-end of (-)DNA is covalently linked to P protein. Partial (+)DNA is synthesized from the (-)DNA template and generates the relaxed circular DNA (RC-DNA) genome. After budding and infection, the RC-DNA migrates in the nucleus, and is converted into a plasmid-like covalently closed circular DNA (cccDNA). The activity of P protein does not seem to be necessary for cccDNA generation, and is presumably released from (+)DNA by host nuclear DNA repair machinery. The sequence is that of Protein P from Hepatitis B virus genotype C subtype adr (isolate Japan/Nishioka/1983) (HBV-C).